Consider the following 117-residue polypeptide: Large ribosomal subunit protein bL20 (117 aa).

Belongs to the bacterial ribosomal protein bL20 family.

Binds directly to 23S ribosomal RNA and is necessary for the in vitro assembly process of the 50S ribosomal subunit. It is not involved in the protein synthesizing functions of that subunit. This Synechocystis sp. (strain ATCC 27184 / PCC 6803 / Kazusa) protein is Large ribosomal subunit protein bL20 (rplT).